A 66-amino-acid chain; its full sequence is U1-theraphotoxin-Cg1a 2 (66 aa).

An N-terminal signal peptide occupies residues Met-1–Ala-21. Residues Ala-22–Arg-29 constitute a propeptide that is removed on maturation. 3 disulfide bridges follow: Cys-31-Cys-46, Cys-38-Cys-51, and Cys-45-Cys-58. Residue Pro-63 is modified to Proline amide.

Belongs to the neurotoxin 10 (Hwtx-1) family. 46 (Jztx-7/10/12) subfamily. Expressed by the venom gland.

The protein resides in the secreted. In terms of biological role, probable ion channel inhibitor. This is U1-theraphotoxin-Cg1a 2 from Chilobrachys guangxiensis (Chinese earth tiger tarantula).